Reading from the N-terminus, the 247-residue chain is Segregation and condensation protein A (247 aa).

It belongs to the ScpA family. Component of a cohesin-like complex composed of ScpA, ScpB and the Smc homodimer, in which ScpA and ScpB bind to the head domain of Smc. The presence of the three proteins is required for the association of the complex with DNA.

The protein localises to the cytoplasm. In terms of biological role, participates in chromosomal partition during cell division. May act via the formation of a condensin-like complex containing Smc and ScpB that pull DNA away from mid-cell into both cell halves. This Bacillus cereus (strain 03BB102) protein is Segregation and condensation protein A.